Reading from the N-terminus, the 133-residue chain is Probable nuclear transport factor 2 (133 aa).

The NTF2 domain maps to 10–128 (VAKAFIQHYY…YFIGNEIFRL (119 aa)).

Its subcellular location is the cytoplasm. In terms of biological role, facilitates protein transport into the nucleus. Could be part of a multicomponent system of cytosolic factors that assemble at the pore complex during nuclear import. The polypeptide is Probable nuclear transport factor 2 (ran-4) (Caenorhabditis elegans).